We begin with the raw amino-acid sequence, 255 residues long: Aliphatic sulfonates import ATP-binding protein SsuB (255 aa).

The region spanning 12 to 233 (LLLNAVSKHY…RLGSVRLAEL (222 aa)) is the ABC transporter domain. 44–51 (GRSGGGKS) is an ATP binding site.

It belongs to the ABC transporter superfamily. Aliphatic sulfonates importer (TC 3.A.1.17.2) family. As to quaternary structure, the complex is composed of two ATP-binding proteins (SsuB), two transmembrane proteins (SsuC) and a solute-binding protein (SsuA).

The protein localises to the cell inner membrane. The catalysed reaction is ATP + H2O + aliphatic sulfonate-[sulfonate-binding protein]Side 1 = ADP + phosphate + aliphatic sulfonateSide 2 + [sulfonate-binding protein]Side 1.. Part of the ABC transporter complex SsuABC involved in aliphatic sulfonates import. Responsible for energy coupling to the transport system. The sequence is that of Aliphatic sulfonates import ATP-binding protein SsuB from Shigella sonnei (strain Ss046).